A 372-amino-acid polypeptide reads, in one-letter code: Cyanuric acid amidohydrolase (372 aa).

The interval methionine 1–glutamate 105 is RU A. Substrate contacts are provided by residues arginine 56 and serine 84–glycine 85. Residues serine 115–arginine 252 form an RU B region. Lysine 165 is an active-site residue. Substrate is bound by residues arginine 197 and serine 235–glycine 236. Serine 235 (nucleophile) is an active-site residue. The interval leucine 258–threonine 372 is RU C. A Mg(2+)-binding site is contributed by glutamate 305. Substrate is bound by residues arginine 332 and serine 351–glycine 352. Positions 354, 357, 358, 359, and 362 each coordinate Mg(2+).

The protein belongs to the cyclic amide hydrolase (CyAH) family. As to quaternary structure, homotetramer.

The enzyme catalyses cyanurate + H2O = 1-carboxybiuret + H(+). It functions in the pathway xenobiotic degradation; atrazine degradation; biuret from cyanurate: step 1/1. Inhibited by barbituric acid. In terms of biological role, responsible for the hydrolysis of cyanuric acid, an intermediate formed during catabolism of s-triazine based compounds in herbicides such as atrazine and polymers such as melamine. Catalyzes the hydrolytic opening of the s-triazine ring of cyanuric acid (2,4,6-trihydroxy-s-triazine) to yield carbon dioxide and carboxybiuret, which spontaneously decarboxylates to biuret. In Bradyrhizobium sp. (strain ORS 375), this protein is Cyanuric acid amidohydrolase.